A 424-amino-acid polypeptide reads, in one-letter code: Exodeoxyribonuclease 7 large subunit (424 aa).

It belongs to the XseA family. As to quaternary structure, heterooligomer composed of large and small subunits.

The protein resides in the cytoplasm. The catalysed reaction is Exonucleolytic cleavage in either 5'- to 3'- or 3'- to 5'-direction to yield nucleoside 5'-phosphates.. Its function is as follows. Bidirectionally degrades single-stranded DNA into large acid-insoluble oligonucleotides, which are then degraded further into small acid-soluble oligonucleotides. This is Exodeoxyribonuclease 7 large subunit from Cyanothece sp. (strain PCC 7425 / ATCC 29141).